The following is a 342-amino-acid chain: Ribosomal RNA small subunit methyltransferase C (342 aa).

The protein belongs to the methyltransferase superfamily. RsmC family. In terms of assembly, monomer.

The protein resides in the cytoplasm. It carries out the reaction guanosine(1207) in 16S rRNA + S-adenosyl-L-methionine = N(2)-methylguanosine(1207) in 16S rRNA + S-adenosyl-L-homocysteine + H(+). In terms of biological role, specifically methylates the guanine in position 1207 of 16S rRNA in the 30S particle. The polypeptide is Ribosomal RNA small subunit methyltransferase C (Salmonella newport (strain SL254)).